The following is a 306-amino-acid chain: Grixazone synthase (306 aa).

Residues His-39, His-58, His-67, His-222, His-226, and His-248 each contribute to the Cu(2+) site.

This sequence belongs to the tyrosinase family. The cofactor is Cu(2+).

The enzyme catalyses 2 3-amino-4-hydroxybenzoate + N-acetyl-L-cysteine + 2 O2 + H(+) = grixazone B + CO2 + 4 H2O. It catalyses the reaction 2 3-amino-4-hydroxybenzaldehyde + N-acetyl-L-cysteine + 2 O2 = grixazone A + formate + 3 H2O + H(+). The catalysed reaction is 4 2-aminophenol + 3 O2 = 2 2-aminophenoxazin-3-one + 6 H2O. With respect to regulation, inhibited by 3-amino-4-hydroxybenzensulfonic acid, 4-hydroxy-3-nitrobenzaldehyde, L-tyrosine, p-hydroxybenzaldehyde. Activated by the copper chaperone GriE. Involved in the biosynthesis of the parasiticide antibiotic grixazone. Catalyzes the oxidation of 3-amino-4-hydroxybenzoate (3,4-AHBOA) to yield the corresponding quinone imine which is then non-enzymatically conjugated with the thiol group of N-acetylcysteine. The resultant compound is oxidized to its quinone imine enzymatically and is then dimerized non-enzymatically with another quinone imine oxidized by GriF to yield grixazone B. 3-amino-4-hydroxybenzaldehyde (3,4-AHBAL) can also be used as substrate to yield grixazone A. In the grixazone biosynthetic pathway, it can also function as an o-aminophenol oxidase that catalyzes the formation of the phenoxazinone chromophore from alpha-aminophenol. It can also use 2-amino-4-methylphenol, and to a lesser extent, 3,4-dihydroxybenzaldehyde, catechol and 3,4-dihydroxy-L-phenylalanine (L-DOPA) as substrates. In contrast to tyrosinases, it does not display monophenolase activity. The protein is Grixazone synthase of Streptomyces griseus subsp. griseus (strain JCM 4626 / CBS 651.72 / NBRC 13350 / KCC S-0626 / ISP 5235).